We begin with the raw amino-acid sequence, 699 residues long: Endogenous retrovirus group K member 8 Env polyprotein (699 aa).

The segment at 1–47 is disordered; it reads MNPSEMQRKAPPRRRRHRNRAPLTHKMNKMVTSEEQMKLPSTKKAEP. A signal peptide spans 1–89; it reads MNPSEMQRKA…ALMIVSMVVS (89 aa). Positions 10-20 are enriched in basic residues; that stretch reads APPRRRRHRNR. Residues 90–632 lie on the Extracellular side of the membrane; it reads LPMPAGAAVA…NLNPVTWVKT (543 aa). N-linked (GlcNAc...) asparagine glycosylation is found at asparagine 100, asparagine 128, asparagine 153, asparagine 274, asparagine 355, asparagine 372, and asparagine 461. Residues 466–486 are fusion peptide; the sequence is FIFTLIAVIMGLIAVTATAAV. N-linked (GlcNAc...) asparagine glycosylation is found at asparagine 507, asparagine 554, asparagine 566, and asparagine 585. A helical membrane pass occupies residues 633–653; sequence IGSTTIINLILILVCLFCLLL. The Cytoplasmic portion of the chain corresponds to 654 to 699; it reads VCRCTQQLRRDSDHRERAMMTMAVLSKRKGGNVGKSKRDQIVTVSV.

Belongs to the beta type-B retroviral envelope protein family. HERV class-II K(HML-2) env subfamily. As to quaternary structure, the surface (SU) and transmembrane (TM) proteins form a heterodimer. SU and TM are attached by noncovalent interactions or by a labile interchain disulfide bond. In terms of processing, specific enzymatic cleavages in vivo yield the mature SU and TM proteins.

The protein resides in the cell membrane. Its subcellular location is the virion. Functionally, retroviral envelope proteins mediate receptor recognition and membrane fusion during early infection. Endogenous envelope proteins may have kept, lost or modified their original function during evolution. This endogenous envelope protein has lost its original fusogenic properties. SU mediates receptor recognition. Its function is as follows. TM anchors the envelope heterodimer to the viral membrane through one transmembrane domain. The other hydrophobic domain, called fusion peptide, mediates fusion of the viral membrane with the target cell membrane. The chain is Endogenous retrovirus group K member 8 Env polyprotein (ERVK-8) from Homo sapiens (Human).